Reading from the N-terminus, the 144-residue chain is Maximins 6/H10 (144 aa).

The first 18 residues, 1 to 18, serve as a signal peptide directing secretion; it reads MNFKYIVAVSFLIASAYA. Positions 19 to 43 are excised as a propeptide; sequence RSVKNDEQSLSQRDVLDEESLREIR. Asn70 carries the post-translational modification Asparagine amide. The propeptide occupies 74–123; that stretch reads TAEDHEVMKRLEAVMRDLDSLDHPEEASERETRGFNQEEIANRFTKKEKR. Position 143 is a leucine amide (Leu143).

Belongs to the bombinin family. Expressed by the skin glands.

The protein localises to the secreted. In terms of biological role, maximin-6 shows antimicrobial activity against bacteria and against the fungus C.albicans. It has little hemolytic activity. Its function is as follows. Maximin-H10 shows antimicrobial activity against bacteria and against the fungus C.albicans. Shows strong hemolytic activity. This chain is Maximins 6/H10, found in Bombina maxima (Giant fire-bellied toad).